The primary structure comprises 355 residues: Gibberellin 3-beta-dioxygenase 4 (355 aa).

A Fe2OG dioxygenase domain is found at 203–303; the sequence is GRGAIRLNHY…RISIAYLWGG (101 aa). Positions 227, 229, and 284 each coordinate Fe cation. The active site involves arginine 294.

This sequence belongs to the iron/ascorbate-dependent oxidoreductase family. GA3OX subfamily. The cofactor is L-ascorbate. Fe cation serves as cofactor. As to expression, expressed in siliques and in seeds, specifically at the rim of the embryo and the outer integument. Also expressed in flowers. Not detected in roots, stems and leaves.

It catalyses the reaction gibberellin A20 + 2-oxoglutarate + O2 = gibberellin A1 + succinate + CO2. Its pathway is plant hormone biosynthesis; gibberellin biosynthesis. Functionally, converts the inactive gibberellin (GA) precursors GA9 and GA20 in the bioactives gibberellins GA4 and GA1. Involved in the production of bioactive GA for reproductive development. The sequence is that of Gibberellin 3-beta-dioxygenase 4 from Arabidopsis thaliana (Mouse-ear cress).